Consider the following 79-residue polypeptide: Acyl carrier protein (79 aa).

The 76-residue stretch at 2 to 77 (STIEERVKKI…QAIDYVKAHV (76 aa)) folds into the Carrier domain. Position 37 is an O-(pantetheine 4'-phosphoryl)serine (serine 37).

Belongs to the acyl carrier protein (ACP) family. Post-translationally, 4'-phosphopantetheine is transferred from CoA to a specific serine of apo-ACP by AcpS. This modification is essential for activity because fatty acids are bound in thioester linkage to the sulfhydryl of the prosthetic group.

Its subcellular location is the cytoplasm. The protein operates within lipid metabolism; fatty acid biosynthesis. Its function is as follows. Carrier of the growing fatty acid chain in fatty acid biosynthesis. The sequence is that of Acyl carrier protein from Xanthomonas axonopodis pv. citri (strain 306).